Here is a 451-residue protein sequence, read N- to C-terminus: D-ribitol-5-phosphate cytidylyltransferase (451 aa).

The segment at 1 to 29 (MEAGPPGSARPAEPGPCLSGQRGADHTAS) is disordered.

Belongs to the IspD/TarI cytidylyltransferase family. IspD subfamily. As to quaternary structure, homodimer. In terms of tissue distribution, ubiquitously expressed, with high expression in brain.

It is found in the cytoplasm. The protein localises to the cytosol. The enzyme catalyses D-ribitol 5-phosphate + CTP + H(+) = CDP-L-ribitol + diphosphate. The catalysed reaction is D-ribose 5-phosphate + CTP + H(+) = CDP-D-ribose + diphosphate. It catalyses the reaction D-ribulose 5-phosphate + CTP + H(+) = CDP-D-ribulose + diphosphate. It functions in the pathway protein modification; protein glycosylation. Cytidylyltransferase required for protein O-linked mannosylation. Catalyzes the formation of CDP-ribitol nucleotide sugar from D-ribitol 5-phosphate. CDP-ribitol is a substrate of FKTN during the biosynthesis of the phosphorylated O-mannosyl trisaccharide (N-acetylgalactosamine-beta-3-N-acetylglucosamine-beta-4-(phosphate-6-)mannose), a carbohydrate structure present in alpha-dystroglycan (DAG1), which is required for binding laminin G-like domain-containing extracellular proteins with high affinity. Shows activity toward other pentose phosphate sugars and mediates formation of CDP-ribulose or CDP-ribose using CTP and ribulose-5-phosphate or ribose-5-phosphate, respectively. Not Involved in dolichol production. The polypeptide is D-ribitol-5-phosphate cytidylyltransferase (Homo sapiens (Human)).